We begin with the raw amino-acid sequence, 459 residues long: 1,3-beta-glucanosyltransferase gas2 (459 aa).

An N-terminal signal peptide occupies residues 1-19 (MVSFTKFTLQLLSASAAFA). Residues Asn34 and Asn68 are each glycosylated (N-linked (GlcNAc...) asparagine). A disulfide bridge connects residues Cys69 and Cys98. Tyr87 contacts (1,3-beta-D-glucosyl)n. N-linked (GlcNAc...) asparagine glycans are attached at residues Asn90, Asn104, and Asn146. (1,3-beta-D-glucosyl)n contacts are provided by Asn155 and Glu156. Glu156 functions as the Proton donor in the catalytic mechanism. Asn160 is a glycosylation site (N-linked (GlcNAc...) asparagine). Residues Asp197 and Arg202 each contribute to the (1,3-beta-D-glucosyl)n site. Intrachain disulfides connect Cys211/Cys350 and Cys235/Cys266. Asn212, Asn218, and Asn254 each carry an N-linked (GlcNAc...) asparagine glycan. The active-site Nucleophile is the Glu263. Asn284 carries N-linked (GlcNAc...) asparagine glycosylation. Tyr295 provides a ligand contact to (1,3-beta-D-glucosyl)n. Asn308, Asn334, Asn344, Asn354, and Asn370 each carry an N-linked (GlcNAc...) asparagine glycan. Cystine bridges form between Cys374–Cys427, Cys383–Cys449, and Cys402–Cys409. Residue Asn423 is glycosylated (N-linked (GlcNAc...) asparagine).

The protein belongs to the glycosyl hydrolase 72 family.

The protein resides in the endoplasmic reticulum lumen. Its subcellular location is the secreted. In terms of biological role, splits internally a 1,3-beta-glucan molecule and transfers the newly generated reducing end (the donor) to the non-reducing end of another 1,3-beta-glucan molecule (the acceptor) forming a 1,3-beta linkage, resulting in the elongation of 1,3-beta-glucan chains in the cell wall. The polypeptide is 1,3-beta-glucanosyltransferase gas2 (gas2) (Schizosaccharomyces pombe (strain 972 / ATCC 24843) (Fission yeast)).